A 392-amino-acid polypeptide reads, in one-letter code: O-phospho-L-seryl-tRNA:Cys-tRNA synthase 1 (392 aa).

Pyridoxal 5'-phosphate is bound by residues 85–86, Asn-190, and 213–215; these read AR and SGH. At Lys-216 the chain carries N6-(pyridoxal phosphate)lysine.

The protein belongs to the SepCysS family. As to quaternary structure, homodimer. Interacts with SepRS. Pyridoxal 5'-phosphate is required as a cofactor.

The enzyme catalyses O-phospho-L-seryl-tRNA(Cys) + hydrogen sulfide + H(+) = L-cysteinyl-tRNA(Cys) + phosphate. In terms of biological role, converts O-phospho-L-seryl-tRNA(Cys) (Sep-tRNA(Cys)) to L-cysteinyl-tRNA(Cys) (Cys-tRNA(Cys)). The sequence is that of O-phospho-L-seryl-tRNA:Cys-tRNA synthase 1 from Methanoregula boonei (strain DSM 21154 / JCM 14090 / 6A8).